Reading from the N-terminus, the 319-residue chain is Acetyl-coenzyme A carboxylase carboxyl transferase subunit alpha (319 aa).

Residues 39–293 enclose the CoA carboxyltransferase C-terminal domain; it reads KLEQKAAQLL…GDAIAEELKG (255 aa).

It belongs to the AccA family. As to quaternary structure, acetyl-CoA carboxylase is a heterohexamer composed of biotin carboxyl carrier protein (AccB), biotin carboxylase (AccC) and two subunits each of ACCase subunit alpha (AccA) and ACCase subunit beta (AccD).

The protein localises to the cytoplasm. The catalysed reaction is N(6)-carboxybiotinyl-L-lysyl-[protein] + acetyl-CoA = N(6)-biotinyl-L-lysyl-[protein] + malonyl-CoA. It functions in the pathway lipid metabolism; malonyl-CoA biosynthesis; malonyl-CoA from acetyl-CoA: step 1/1. In terms of biological role, component of the acetyl coenzyme A carboxylase (ACC) complex. First, biotin carboxylase catalyzes the carboxylation of biotin on its carrier protein (BCCP) and then the CO(2) group is transferred by the carboxyltransferase to acetyl-CoA to form malonyl-CoA. This chain is Acetyl-coenzyme A carboxylase carboxyl transferase subunit alpha, found in Parvibaculum lavamentivorans (strain DS-1 / DSM 13023 / NCIMB 13966).